Here is a 263-residue protein sequence, read N- to C-terminus: Syntaxin-73 (263 aa).

Topologically, residues 1–240 (MGVIDLITRV…TVTKLRSSRN (240 aa)) are cytoplasmic. At Ser-12 the chain carries Phosphoserine. The t-SNARE coiled-coil homology domain maps to 169–231 (YEMKRIKQAR…KSTNVRLKDT (63 aa)). Residues 241–261 (FCIDIILLCILLGIAAFIYNS) traverse the membrane as a helical; Anchor for type IV membrane protein segment. Residues 262–263 (VK) are Vesicular-facing.

This sequence belongs to the syntaxin family. Part of the t-SNARE complex. In terms of tissue distribution, expressed in root, leaf, stem, flower and silique.

It is found in the membrane. In terms of biological role, vesicle trafficking protein that functions in the secretory pathway. The sequence is that of Syntaxin-73 (SYP73) from Arabidopsis thaliana (Mouse-ear cress).